We begin with the raw amino-acid sequence, 219 residues long: Vesicle-associated membrane protein 721 (219 aa).

Topologically, residues methionine 1–leucine 196 are cytoplasmic. One can recognise a Longin domain in the interval phenylalanine 10–leucine 114. Residues lysine 130–glutamine 190 form the v-SNARE coiled-coil homology domain. Residues isoleucine 197–phenylalanine 217 form a helical; Anchor for type IV membrane protein membrane-spanning segment. Residues lysine 218 to cysteine 219 lie on the Vesicular side of the membrane.

Belongs to the synaptobrevin family. As to expression, expressed in flowers, leaves, stems and roots.

The protein resides in the cell membrane. Its subcellular location is the early endosome membrane. In terms of biological role, involved in the targeting and/or fusion of transport vesicles to their target membrane. The sequence is that of Vesicle-associated membrane protein 721 from Arabidopsis thaliana (Mouse-ear cress).